The primary structure comprises 432 residues: EF-hand calcium-binding domain-containing protein 3 (432 aa).

2 EF-hand domains span residues 45–80 (AQLEAFRNAYNFFTKDRTGCIDSHGLMSTVAKLGMN) and 81–116 (LNAYDIYNELKCADRDRDGKINFSDFIDVLTDKKLF). The Ca(2+) site is built by Asp-94, Asp-96, Asp-98, Lys-100, and Asp-105. The residue at position 273 (Tyr-273) is a Phosphotyrosine. Residues 394–432 (NVNKTSPSNSGLSSPSDLSESDPETGRKRKRKSSRGFRQ) are disordered. Residues 399 to 411 (SPSNSGLSSPSDL) show a composition bias toward low complexity. Basic residues predominate over residues 420-432 (RKRKRKSSRGFRQ).

This Rattus norvegicus (Rat) protein is EF-hand calcium-binding domain-containing protein 3 (Efcab3).